A 239-amino-acid chain; its full sequence is Pyridoxal 5'-phosphate synthase subunit PdxS (239 aa).

Asp21 contributes to the D-ribose 5-phosphate binding site. Catalysis depends on Lys78, which acts as the Schiff-base intermediate with D-ribose 5-phosphate. Gly150 contacts D-ribose 5-phosphate. Arg162 serves as a coordination point for D-glyceraldehyde 3-phosphate. D-ribose 5-phosphate-binding positions include Gly211 and 232-233 (GS).

This sequence belongs to the PdxS/SNZ family. In terms of assembly, in the presence of PdxT, forms a dodecamer of heterodimers.

The enzyme catalyses aldehydo-D-ribose 5-phosphate + D-glyceraldehyde 3-phosphate + L-glutamine = pyridoxal 5'-phosphate + L-glutamate + phosphate + 3 H2O + H(+). The protein operates within cofactor biosynthesis; pyridoxal 5'-phosphate biosynthesis. Catalyzes the formation of pyridoxal 5'-phosphate from ribose 5-phosphate (RBP), glyceraldehyde 3-phosphate (G3P) and ammonia. The ammonia is provided by the PdxT subunit. Can also use ribulose 5-phosphate and dihydroxyacetone phosphate as substrates, resulting from enzyme-catalyzed isomerization of RBP and G3P, respectively. This chain is Pyridoxal 5'-phosphate synthase subunit PdxS, found in Francisella tularensis.